The chain runs to 542 residues: Nif-specific regulatory protein (542 aa).

In terms of domain architecture, GAF spans 29-170; that stretch reads DLSKTLREVL…MVANLIGQTV (142 aa). In terms of domain architecture, Sigma-54 factor interaction spans 203 to 432; sequence VIGISKAMQE…LENCVERTAT (230 aa). Residues 231–238 and 294–303 contribute to the ATP site; these read GESGTGKE and AHGGTLFLDE. The interval 433–499 is inter-domain linker; the sequence is MMRGDLITEV…ATGAAPPTSE (67 aa). A divalent metal cation contacts are provided by Cys446 and Cys451. The C-terminal DNA-binding domain stretch occupies residues 500–542; that stretch reads RERLIWAMEQCGWVQAKAARALNISPRQMGYALQKFNIEVKKF. A DNA-binding region (H-T-H motif) is located at residues 514–533; it reads QAKAARALNISPRQMGYALQ.

As to quaternary structure, interacts with sigma-54.

In terms of biological role, required for activation of most nif operons, which are directly involved in nitrogen fixation. This Herbaspirillum seropedicae protein is Nif-specific regulatory protein (nifA).